The chain runs to 365 residues: UDP-N-acetylglucosamine--N-acetylmuramyl-(pentapeptide) pyrophosphoryl-undecaprenol N-acetylglucosamine transferase (365 aa).

UDP-N-acetyl-alpha-D-glucosamine contacts are provided by residues 19 to 21 (TGG), Asn131, Arg170, Ser201, Ile255, 274 to 279 (ALTVTE), and Gln300.

The protein belongs to the glycosyltransferase 28 family. MurG subfamily.

The protein resides in the cell inner membrane. It carries out the reaction di-trans,octa-cis-undecaprenyl diphospho-N-acetyl-alpha-D-muramoyl-L-alanyl-D-glutamyl-meso-2,6-diaminopimeloyl-D-alanyl-D-alanine + UDP-N-acetyl-alpha-D-glucosamine = di-trans,octa-cis-undecaprenyl diphospho-[N-acetyl-alpha-D-glucosaminyl-(1-&gt;4)]-N-acetyl-alpha-D-muramoyl-L-alanyl-D-glutamyl-meso-2,6-diaminopimeloyl-D-alanyl-D-alanine + UDP + H(+). Its pathway is cell wall biogenesis; peptidoglycan biosynthesis. Cell wall formation. Catalyzes the transfer of a GlcNAc subunit on undecaprenyl-pyrophosphoryl-MurNAc-pentapeptide (lipid intermediate I) to form undecaprenyl-pyrophosphoryl-MurNAc-(pentapeptide)GlcNAc (lipid intermediate II). This Acinetobacter baumannii (strain ATCC 17978 / DSM 105126 / CIP 53.77 / LMG 1025 / NCDC KC755 / 5377) protein is UDP-N-acetylglucosamine--N-acetylmuramyl-(pentapeptide) pyrophosphoryl-undecaprenol N-acetylglucosamine transferase.